Reading from the N-terminus, the 180-residue chain is ATP synthase subunit delta (180 aa).

Belongs to the ATPase delta chain family. F-type ATPases have 2 components, F(1) - the catalytic core - and F(0) - the membrane proton channel. F(1) has five subunits: alpha(3), beta(3), gamma(1), delta(1), epsilon(1). F(0) has three main subunits: a(1), b(2) and c(10-14). The alpha and beta chains form an alternating ring which encloses part of the gamma chain. F(1) is attached to F(0) by a central stalk formed by the gamma and epsilon chains, while a peripheral stalk is formed by the delta and b chains.

Its subcellular location is the cell membrane. In terms of biological role, f(1)F(0) ATP synthase produces ATP from ADP in the presence of a proton or sodium gradient. F-type ATPases consist of two structural domains, F(1) containing the extramembraneous catalytic core and F(0) containing the membrane proton channel, linked together by a central stalk and a peripheral stalk. During catalysis, ATP synthesis in the catalytic domain of F(1) is coupled via a rotary mechanism of the central stalk subunits to proton translocation. Functionally, this protein is part of the stalk that links CF(0) to CF(1). It either transmits conformational changes from CF(0) to CF(1) or is implicated in proton conduction. This chain is ATP synthase subunit delta, found in Lactobacillus delbrueckii subsp. bulgaricus (strain ATCC 11842 / DSM 20081 / BCRC 10696 / JCM 1002 / NBRC 13953 / NCIMB 11778 / NCTC 12712 / WDCM 00102 / Lb 14).